The sequence spans 107 residues: Large ribosomal subunit protein uL24 (107 aa).

The protein belongs to the universal ribosomal protein uL24 family. As to quaternary structure, part of the 50S ribosomal subunit.

Its function is as follows. One of two assembly initiator proteins, it binds directly to the 5'-end of the 23S rRNA, where it nucleates assembly of the 50S subunit. In terms of biological role, one of the proteins that surrounds the polypeptide exit tunnel on the outside of the subunit. This is Large ribosomal subunit protein uL24 from Mycobacterium ulcerans (strain Agy99).